The chain runs to 226 residues: Large ribosomal subunit protein uL3 (226 aa).

The protein belongs to the universal ribosomal protein uL3 family. As to quaternary structure, part of the 50S ribosomal subunit. Forms a cluster with proteins L14 and L19.

In terms of biological role, one of the primary rRNA binding proteins, it binds directly near the 3'-end of the 23S rRNA, where it nucleates assembly of the 50S subunit. In Sulfurihydrogenibium sp. (strain YO3AOP1), this protein is Large ribosomal subunit protein uL3.